Consider the following 448-residue polypeptide: Bud neck protein 5 (448 aa).

Disordered stretches follow at residues 63-103 (SGND…DPSQ), 171-211 (DDEW…TLGG), and 242-352 (GDNE…SSPI). Residues S70 and S179 each carry the phosphoserine modification. Residues 171–180 (DDEWEDEKSD) show a composition bias toward acidic residues. Basic and acidic residues predominate over residues 181 to 191 (VEEGRVDKGTE). S194 bears the Phosphoserine mark. Basic and acidic residues predominate over residues 245-262 (EYNHESSRLADQTPHDDN). Residue T257 is modified to Phosphothreonine. Positions 264–281 (ENCPNRSGGSTPLDSQTK) are enriched in polar residues. A phosphoserine mark is found at S270 and S273. Phosphothreonine is present on T274. Over residues 325-343 (SVSSNSNSRNGSRKSSLNK) the composition is skewed to low complexity. Phosphoserine occurs at positions 332 and 340. Y344 carries the phosphotyrosine modification. Phosphoserine occurs at positions 346 and 350.

Component of the GIN4 complex composed of at least BNI5, CDC3, CDC10, CDC11, CDC12, GIN4, NAP1 and SHS1. Interacts directly with CDC11, CDC12 and SHS1.

Its subcellular location is the cytoplasm. The protein resides in the bud neck. Functionally, required for normal septin function and cytokinesis. Its recruitment to the bud neck by CDCd11 and SHS1 ensures efficient localization at the bud neck of MYO1, the type II myosin of the actomyosin contractile ring. The chain is Bud neck protein 5 from Saccharomyces cerevisiae (strain ATCC 204508 / S288c) (Baker's yeast).